The chain runs to 436 residues: ATP-dependent RNA helicase RhlB (436 aa).

The Q motif motif lies at 9–37 (QKFADFPLHKEVHQALNEAGFEFCTPIQA). The Helicase ATP-binding domain maps to 40–219 (LPILLEKKDI…YDHMNEPEKV (180 aa)). Residue 53 to 60 (AQTGTGKT) coordinates ATP. The DEAD box signature appears at 165–168 (DEAD). The 148-residue stretch at 243–390 (KMPLLLSLLE…VTSYDSDALL (148 aa)) folds into the Helicase C-terminal domain. A disordered region spans residues 392-436 (DIPPPVRIHRKPSTHTRNTRDRGASRPQGGQRSGPRRHDRTRRHS). A compositionally biased stretch (basic residues) spans 425–436 (GPRRHDRTRRHS).

Belongs to the DEAD box helicase family. RhlB subfamily. In terms of assembly, component of the RNA degradosome, which is a multiprotein complex involved in RNA processing and mRNA degradation.

Its subcellular location is the cytoplasm. It carries out the reaction ATP + H2O = ADP + phosphate + H(+). Functionally, DEAD-box RNA helicase involved in RNA degradation. Has RNA-dependent ATPase activity and unwinds double-stranded RNA. The protein is ATP-dependent RNA helicase RhlB of Shewanella halifaxensis (strain HAW-EB4).